The sequence spans 494 residues: Alpha-amylase-related protein (494 aa).

An N-terminal signal peptide occupies residues 1-20 (MFKFTFALALCVLAAGLVLA). Residue Gln21 is modified to Pyrrolidone carboxylic acid. Cys48 and Cys104 are joined by a disulfide. 3 residues coordinate Ca(2+): Asn118, Gln169, and Asp178. Cys157 and Cys171 are joined by a disulfide. Arg206 contributes to the chloride binding site. Residue Asp208 is the Nucleophile of the active site. A Ca(2+)-binding site is contributed by His212. The active-site Proton donor is Glu245. Chloride is bound by residues Asn308 and Arg343. Disulfide bonds link Cys376/Cys382, Cys418/Cys441, and Cys448/Cys460.

It belongs to the glycosyl hydrolase 13 family. As to quaternary structure, monomer. Ca(2+) is required as a cofactor. Chloride serves as cofactor.

It localises to the secreted. The enzyme catalyses Endohydrolysis of (1-&gt;4)-alpha-D-glucosidic linkages in polysaccharides containing three or more (1-&gt;4)-alpha-linked D-glucose units.. This chain is Alpha-amylase-related protein (Amyrel), found in Drosophila pseudoobscura pseudoobscura (Fruit fly).